A 356-amino-acid chain; its full sequence is Homoserine O-acetyltransferase (356 aa).

The region spanning 49 to 337 is the AB hydrolase-1 domain; sequence VLICHALTGS…KSTHGHDAFL (289 aa). Catalysis depends on S143, which acts as the Nucleophile. R212 lines the substrate pocket. Residues D304 and H333 contribute to the active site. D334 is a substrate binding site.

It belongs to the AB hydrolase superfamily. MetX family. As to quaternary structure, homodimer.

The protein localises to the cytoplasm. It carries out the reaction L-homoserine + acetyl-CoA = O-acetyl-L-homoserine + CoA. It participates in amino-acid biosynthesis; L-methionine biosynthesis via de novo pathway; O-acetyl-L-homoserine from L-homoserine: step 1/1. Functionally, transfers an acetyl group from acetyl-CoA to L-homoserine, forming acetyl-L-homoserine. In Nostoc punctiforme (strain ATCC 29133 / PCC 73102), this protein is Homoserine O-acetyltransferase.